The following is a 415-amino-acid chain: Trehalose synthase (415 aa).

This sequence belongs to the glycosyltransferase group 1 family. Glycosyltransferase 4 subfamily. In terms of assembly, homodimer. It depends on Mg(2+) as a cofactor.

The catalysed reaction is an NDP-alpha-D-glucose + D-glucose = alpha,alpha-trehalose + a ribonucleoside 5'-diphosphate + H(+). Its function is as follows. Synthesizes trehalose from ADP-, UDP- or GDP-glucose and glucose. This chain is Trehalose synthase, found in Pyrococcus horikoshii (strain ATCC 700860 / DSM 12428 / JCM 9974 / NBRC 100139 / OT-3).